The chain runs to 943 residues: Isoleucine--tRNA ligase (943 aa).

Residues 58 to 68 (PYANGKIHIGH) carry the 'HIGH' region motif. Glu-567 contributes to the L-isoleucyl-5'-AMP binding site. Positions 608-612 (KMSKS) match the 'KMSKS' region motif. Lys-611 contacts ATP. 4 residues coordinate Zn(2+): Cys-906, Cys-909, Cys-926, and Cys-929.

The protein belongs to the class-I aminoacyl-tRNA synthetase family. IleS type 1 subfamily. As to quaternary structure, monomer. Zn(2+) serves as cofactor.

The protein localises to the cytoplasm. The catalysed reaction is tRNA(Ile) + L-isoleucine + ATP = L-isoleucyl-tRNA(Ile) + AMP + diphosphate. Catalyzes the attachment of isoleucine to tRNA(Ile). As IleRS can inadvertently accommodate and process structurally similar amino acids such as valine, to avoid such errors it has two additional distinct tRNA(Ile)-dependent editing activities. One activity is designated as 'pretransfer' editing and involves the hydrolysis of activated Val-AMP. The other activity is designated 'posttransfer' editing and involves deacylation of mischarged Val-tRNA(Ile). This is Isoleucine--tRNA ligase from Pseudomonas putida (strain GB-1).